A 366-amino-acid polypeptide reads, in one-letter code: Dihydroflavonol 4-reductase (366 aa).

NADP(+)-binding residues include Lys45 and Tyr164.

Belongs to the NAD(P)-dependent epimerase/dehydratase family. Dihydroflavonol-4-reductase subfamily.

It catalyses the reaction a (2R,3S,4S)-leucoanthocyanidin + NADP(+) = a (2R,3R)-dihydroflavonol + NADPH + H(+). The catalysed reaction is (2S)-flavan-4-ol + NADP(+) = (2S)-flavanone + NADPH + H(+). Its pathway is pigment biosynthesis; anthocyanin biosynthesis. Its function is as follows. Bifunctional enzyme involved in flavonoid metabolism. In Gerbera hybrida (Daisy), this protein is Dihydroflavonol 4-reductase (DFR).